The primary structure comprises 447 residues: NADP-specific glutamate dehydrogenase (447 aa).

Substrate-binding residues include Lys-92, Gln-113, and Lys-116. The active-site Proton donor is the Lys-128. Gly-167 contributes to the substrate binding site. NADP(+) is bound by residues Thr-211 and Asn-242. Residue Ser-380 participates in substrate binding.

The protein belongs to the Glu/Leu/Phe/Val dehydrogenases family. As to quaternary structure, homohexamer.

It catalyses the reaction L-glutamate + NADP(+) + H2O = 2-oxoglutarate + NH4(+) + NADPH + H(+). Its function is as follows. Catalyzes the reversible oxidative deamination of glutamate to alpha-ketoglutarate and ammonia. The protein is NADP-specific glutamate dehydrogenase (gdhA) of Salmonella typhimurium (strain LT2 / SGSC1412 / ATCC 700720).